We begin with the raw amino-acid sequence, 190 residues long: Small ribosomal subunit protein uS5 (190 aa).

The 64-residue stretch at 22–85 (FVDKLVHINR…ESAKRNLTRV (64 aa)) folds into the S5 DRBM domain.

This sequence belongs to the universal ribosomal protein uS5 family. Part of the 30S ribosomal subunit. Contacts proteins S4 and S8.

With S4 and S12 plays an important role in translational accuracy. Functionally, located at the back of the 30S subunit body where it stabilizes the conformation of the head with respect to the body. This is Small ribosomal subunit protein uS5 from Rhodopseudomonas palustris (strain BisA53).